The primary structure comprises 504 residues: ATP-dependent RNA helicase DBP3 (504 aa).

Over residues methionine 1–glutamate 14 the composition is skewed to basic and acidic residues. The disordered stretch occupies residues methionine 1 to serine 65. Residues serine 20–lysine 53 are compositionally biased toward basic residues. Positions leucine 94–alanine 120 match the Q motif motif. Positions tryptophan 123–valine 296 constitute a Helicase ATP-binding domain. An ATP-binding site is contributed by alanine 136–threonine 143. A DEAD box motif is present at residues aspartate 243–aspartate 246. The Helicase C-terminal domain maps to lysine 325–glycine 474.

The protein belongs to the DEAD box helicase family. DDX5/DBP2 subfamily.

The protein resides in the nucleus. It is found in the nucleolus. It catalyses the reaction ATP + H2O = ADP + phosphate + H(+). Its function is as follows. ATP-dependent RNA helicase required for 60S ribosomal subunit synthesis. Involved in efficient pre-rRNA processing, predominantly at site A3, which is necessary for the normal formation of 25S and 5.8S rRNAs. The sequence is that of ATP-dependent RNA helicase DBP3 (DBP3) from Kluyveromyces lactis (strain ATCC 8585 / CBS 2359 / DSM 70799 / NBRC 1267 / NRRL Y-1140 / WM37) (Yeast).